The following is a 229-amino-acid chain: MRMPLSVLTAAGLSLATLGLGTAGPASATPTAEGAPVVAYDGSPSAGSPADAKAEAAANRAFFEAVLRSVAEKRAANPKSTAAVTVVYNASGAPSFATQIARGTQIWNSSVSNVRLQAGSSGVDFTYREGNDPRGSYASTDGHGRGYIFLDYRQNQTYDSTRVTAHETGHVLGLPDHYSGPCSELMSGGGPGPSCTNAYPNSAERSRVNQLWANGFAAAMDKALEKSAR.

An N-terminal signal peptide occupies residues 1 to 28; it reads MRMPLSVLTAAGLSLATLGLGTAGPASA. A propeptide spanning residues 29–81 is cleaved from the precursor; the sequence is TPTAEGAPVVAYDGSPSAGSPADAKAEAAANRAFFEAVLRSVAEKRAANPKST. The Ca(2+) site is built by Asp-159 and Thr-161. His-166 provides a ligand contact to Zn(2+). The active site involves Glu-167. Positions 170 and 176 each coordinate Zn(2+). A disulfide bond links Cys-182 and Cys-195.

This sequence belongs to the peptidase M7 family. In terms of assembly, monomer. Requires Ca(2+) as cofactor. The cofactor is Zn(2+).

The protein resides in the secreted. It carries out the reaction Hydrolyzes proteins with a preference for Tyr or Phe in the P1' position. Has no action on amino-acid p-nitroanilides.. Functionally, milk hydrolyzing. The chain is Extracellular small neutral protease (snpA) from Streptomyces sp. (strain C5).